We begin with the raw amino-acid sequence, 169 residues long: MKKRTIAELLTDIRMAKYKIDMWISKAENRNKALERLSLSNIGRFPLLSKEYIKETELTRKYIVTLVQLKILLEILEIRLETLIILGNVVTYLSPLVEALNELKGQLGASIEFSPIIDEIIETIRTVYIAPNTVQQSPQINVKEEARQLLKEAEDVAKKELKENYKIEI.

Part of a cell division machinery. May fulfill a coordination function between the Cdv proteins during cell division. The chain is Cell division protein B3 from Sulfolobus acidocaldarius (strain ATCC 33909 / DSM 639 / JCM 8929 / NBRC 15157 / NCIMB 11770).